Reading from the N-terminus, the 411-residue chain is Serine--tRNA ligase (411 aa).

Residue 226 to 228 (TSE) participates in L-serine binding. Residue 257–259 (RKE) participates in ATP binding. Glu-280 provides a ligand contact to L-serine. An ATP-binding site is contributed by 344 to 347 (EISS). Position 379 (Ser-379) interacts with L-serine.

The protein belongs to the class-II aminoacyl-tRNA synthetase family. Type-1 seryl-tRNA synthetase subfamily. Homodimer. The tRNA molecule binds across the dimer.

The protein resides in the cytoplasm. It carries out the reaction tRNA(Ser) + L-serine + ATP = L-seryl-tRNA(Ser) + AMP + diphosphate + H(+). The catalysed reaction is tRNA(Sec) + L-serine + ATP = L-seryl-tRNA(Sec) + AMP + diphosphate + H(+). The protein operates within aminoacyl-tRNA biosynthesis; selenocysteinyl-tRNA(Sec) biosynthesis; L-seryl-tRNA(Sec) from L-serine and tRNA(Sec): step 1/1. Functionally, catalyzes the attachment of serine to tRNA(Ser). Is also able to aminoacylate tRNA(Sec) with serine, to form the misacylated tRNA L-seryl-tRNA(Sec), which will be further converted into selenocysteinyl-tRNA(Sec). This is Serine--tRNA ligase from Campylobacter jejuni subsp. doylei (strain ATCC BAA-1458 / RM4099 / 269.97).